Reading from the N-terminus, the 361-residue chain is Methylthioribose-1-phosphate isomerase (361 aa).

The active-site Proton donor is the aspartate 245.

The protein belongs to the eIF-2B alpha/beta/delta subunits family. MtnA subfamily.

The protein localises to the cytoplasm. Its subcellular location is the nucleus. It catalyses the reaction 5-(methylsulfanyl)-alpha-D-ribose 1-phosphate = 5-(methylsulfanyl)-D-ribulose 1-phosphate. Its pathway is amino-acid biosynthesis; L-methionine biosynthesis via salvage pathway; L-methionine from S-methyl-5-thio-alpha-D-ribose 1-phosphate: step 1/6. Catalyzes the interconversion of methylthioribose-1-phosphate (MTR-1-P) into methylthioribulose-1-phosphate (MTRu-1-P). This is Methylthioribose-1-phosphate isomerase from Monosiga brevicollis (Choanoflagellate).